A 138-amino-acid polypeptide reads, in one-letter code: MKELARFSVTLPNELFDEINKRVKNTEYPSRSEFIRDLVREKIIADKWKDDSQSDAIAVLSIVYSHHQNNLVSQMLELEHHADVKIACSTHIHIDKENCLEMISLQGSGKNIEKFSQKIGSLKGVKFSNLARIGITKA.

Ni(2+) contacts are provided by His80, His91, His93, and Cys99.

It belongs to the transcriptional regulatory CopG/NikR family. The cofactor is Ni(2+).

Functionally, transcriptional regulator. The sequence is that of Putative nickel-responsive regulator from Campylobacter hominis (strain ATCC BAA-381 / DSM 21671 / CCUG 45161 / LMG 19568 / NCTC 13146 / CH001A).